The primary structure comprises 519 residues: Sensory neuron membrane protein 2 (519 aa).

Residues 1 to 7 are Cytoplasmic-facing; the sequence is MLAKHSK. Residues 8-28 traverse the membrane as a helical segment; that stretch reads LFFTGSVVFLIVAIVLASWGF. Residues 29 to 469 are Extracellular-facing; the sequence is PKIISTRIQK…DAHALLSYAQ (441 aa). 7 N-linked (GlcNAc...) asparagine glycosylation sites follow: N44, N67, N104, N166, N229, N272, and N314. 3 cysteine pairs are disulfide-bonded: C268/C338, C299/C362, and C340/C351. Residues 470-490 form a helical membrane-spanning segment; the sequence is LARWIILAAAIILAIIATITV. The Cytoplasmic portion of the chain corresponds to 491–519; the sequence is ARSTSLISWPRNSNSVNFIIGPMVNDKMR.

This sequence belongs to the CD36 family. As to expression, localizes to both male and female antennae but not the leg, wing, gut, head or thoracic ganglia. Detected throughout the sensory epithelium, associating with both sex-pheromone sensilla and plant-volatile sensilla. Differentially expressed among different sensilla and different neurons within a given sensillum.

Its subcellular location is the cell membrane. Functionally, plays an olfactory role that is not restricted to pheromone sensitivity. In Manduca sexta (Tobacco hawkmoth), this protein is Sensory neuron membrane protein 2.